The primary structure comprises 433 residues: Coiled-coil domain-containing protein 71 (433 aa).

At serine 125 the chain carries Phosphoserine. Disordered regions lie at residues 204–256, 284–310, and 325–396; these read LKVR…GCSA, QTKTVRVRAKAKQAKPKAARAKAKAAV, and KAAQ…RKSQ. 2 stretches are compositionally biased toward basic residues: residues 216-230 and 288-306; these read KAPRKITSKGLKHLT and VRVRAKAKQAKPKAARAKA. The stretch at 260-330 forms a coiled coil; it reads KTVQAQASQT…QAKAKAAQTK (71 aa).

This is Coiled-coil domain-containing protein 71 (Ccdc71) from Mus musculus (Mouse).